The primary structure comprises 634 residues: uncharacterized protein (634 aa).

The first 40 residues, 1–40 (MWLQQRLKGLPGLLSSSWARRLLCLLGLLVLLLWFAGSGA), serve as a signal peptide directing secretion. At 41–589 (RRAAGGLQLL…DEHMAQQDPG (549 aa)) the chain is on the extracellular side. Asparagine 363 carries an N-linked (GlcNAc...) asparagine glycan. A helical transmembrane segment spans residues 590-610 (LPFLFWFSVASLITLFHLFLF). Topologically, residues 611-634 (KLIYNEYCGPGAKPFFRNKEDPSV) are cytoplasmic.

Its subcellular location is the membrane. This is an uncharacterized protein from Bos taurus (Bovine).